Reading from the N-terminus, the 136-residue chain is Protein LITTLE ZIPPER 1 (136 aa).

Residues 97–122 (ENQNIIRENEKLKKKALLLHQENKTL) adopt a coiled-coil conformation.

Interacts with REV. In terms of tissue distribution, expressed in the adaxial epidermis of the cotyledons and in the vascular cylinder of wild-type torpedo stage embryos.

In terms of biological role, competitive inhibitor of the HD-ZIPIII transcription factors in shoot apical meristem (SAM) development. Acts by forming non-functional heterodimers. Part of a negative feedback loop. Essential for proper functioning of stem cells in the SAM. The polypeptide is Protein LITTLE ZIPPER 1 (Arabidopsis thaliana (Mouse-ear cress)).